A 375-amino-acid polypeptide reads, in one-letter code: Growth/differentiation factor 8 (375 aa).

Residues 1–18 (MQKLQISVYIYLFMLIVA) form the signal peptide. Positions 19–266 (GPVDLNENSE…VTDTPKRSRR (248 aa)) are excised as a propeptide. 2 N-linked (GlcNAc...) asparagine glycosylation sites follow: Asn47 and Asn71. Disulfide bonds link Cys272–Cys282, Cys281–Cys340, Cys309–Cys372, and Cys313–Cys374.

Belongs to the TGF-beta family. As to quaternary structure, homodimer; disulfide-linked. Interacts with WFIKKN2, leading to inhibit its activity. Interacts with FSTL3. Post-translationally, synthesized as large precursor molecule that undergoes proteolytic cleavage to generate an N-terminal propeptide and a disulfide linked C-terminal dimer, which is the biologically active molecule. The circulating form consists of a latent complex of the C-terminal dimer and other proteins, including its propeptide, which maintain the C-terminal dimer in a latent, inactive state. Ligand activation requires additional cleavage of the prodomain by a tolloid-like metalloproteinase.

The protein resides in the secreted. Acts specifically as a negative regulator of skeletal muscle growth. This is Growth/differentiation factor 8 (MSTN) from Bos gaurus (Seladang).